We begin with the raw amino-acid sequence, 306 residues long: Nucleotide-binding protein amb4396 (306 aa).

Residues 1–14 show a composition bias toward polar residues; that stretch reads MSDLHSSPTDQTSA. Residues 1–20 form a disordered region; sequence MSDLHSSPTDQTSAPAHAGG. 29 to 36 lines the ATP pocket; that stretch reads GMSGAGKT. Residue 77–80 participates in GTP binding; it reads DIRT.

This sequence belongs to the RapZ-like family.

Functionally, displays ATPase and GTPase activities. The polypeptide is Nucleotide-binding protein amb4396 (Paramagnetospirillum magneticum (strain ATCC 700264 / AMB-1) (Magnetospirillum magneticum)).